Here is a 314-residue protein sequence, read N- to C-terminus: Carbamate kinase (314 aa).

This sequence belongs to the carbamate kinase family. In terms of assembly, homodimer.

It is found in the cytoplasm. The enzyme catalyses hydrogencarbonate + NH4(+) + ATP = carbamoyl phosphate + ADP + H2O + H(+). It participates in metabolic intermediate metabolism; carbamoyl phosphate degradation; CO(2) and NH(3) from carbamoyl phosphate: step 1/1. The chain is Carbamate kinase (arcC) from Clostridium perfringens (strain 13 / Type A).